Consider the following 526-residue polypeptide: ATP synthase subunit alpha (526 aa).

171-178 (GDRQTGKT) serves as a coordination point for ATP.

It belongs to the ATPase alpha/beta chains family. F-type ATPases have 2 components, CF(1) - the catalytic core - and CF(0) - the membrane proton channel. CF(1) has five subunits: alpha(3), beta(3), gamma(1), delta(1), epsilon(1). CF(0) has four main subunits: a, b, b' and c.

It is found in the cell inner membrane. It catalyses the reaction ATP + H2O + 4 H(+)(in) = ADP + phosphate + 5 H(+)(out). Its function is as follows. Produces ATP from ADP in the presence of a proton gradient across the membrane. The alpha chain is a regulatory subunit. The chain is ATP synthase subunit alpha from Pelodictyon phaeoclathratiforme (strain DSM 5477 / BU-1).